Here is a 252-residue protein sequence, read N- to C-terminus: 5'-nucleotidase SurE (252 aa).

D8, D9, S40, and N93 together coordinate a divalent metal cation.

This sequence belongs to the SurE nucleotidase family. A divalent metal cation serves as cofactor.

The protein resides in the cytoplasm. It carries out the reaction a ribonucleoside 5'-phosphate + H2O = a ribonucleoside + phosphate. In terms of biological role, nucleotidase that shows phosphatase activity on nucleoside 5'-monophosphates. In Methylocella silvestris (strain DSM 15510 / CIP 108128 / LMG 27833 / NCIMB 13906 / BL2), this protein is 5'-nucleotidase SurE.